A 626-amino-acid polypeptide reads, in one-letter code: Ankyrin repeat domain-containing protein 13B (626 aa).

Methionine 1 carries the post-translational modification N-acetylmethionine. ANK repeat units lie at residues 47–76 (RGRTPLHLATTLGHLECARVLLAHGADVGR) and 80–109 (SGWTVLQEAVSTRDLELVQLVLRYRDYQRV). A disordered region spans residues 442–470 (PVPSVRGSPGSETPSPGSDSSSVSSSSST). A compositionally biased stretch (low complexity) spans 448 to 470 (GSPGSETPSPGSDSSSVSSSSST). Residues 503–522 (EDDDLLRFAIQQSLLEAGSE) form the UIM 1 domain. The segment at 534–614 (NSKPGTHPMS…RRRVRQEEEE (81 aa)) is disordered. Residues 554 to 575 (PPTPQRQPMPPAPVPSPRPSPG) show a composition bias toward pro residues. UIM domains lie at 585 to 604 (SYDEQLRLAMELSAQEQEER) and 610 to 626 (QEEEELERILRLSLTEQ).

In terms of assembly, interacts with EGFR (ubiquitinated); the interaction is direct and may regulate EGFR internalization.

The protein resides in the cell membrane. Its subcellular location is the late endosome. The protein localises to the early endosome. In terms of biological role, ubiquitin-binding protein that specifically recognizes and binds 'Lys-63'-linked ubiquitin. Does not bind 'Lys-48'-linked ubiquitin. Positively regulates the internalization of ligand-activated EGFR by binding to the Ub moiety of ubiquitinated EGFR at the cell membrane. In Mus musculus (Mouse), this protein is Ankyrin repeat domain-containing protein 13B (Ankrd13b).